Here is a 136-residue protein sequence, read N- to C-terminus: Glutamate mutase sigma subunit (136 aa).

A B12-binding domain is found at 3–136 (KKKIVIGVIG…IIDLKKDFKI (134 aa)). Residues 13–17 (SDCHT), His-16, and 61–63 (SSI) each bind adenosylcob(III)alamin.

This sequence belongs to the methylaspartate mutase GlmS subunit family. Heterotetramer composed of 2 epsilon subunits (GlmE) and 2 sigma subunits (GlmS). GlmE exists as a homodimer and GlmS as a monomer. Adenosylcob(III)alamin is required as a cofactor.

It carries out the reaction (2S,3S)-3-methyl-L-aspartate = L-glutamate. It functions in the pathway amino-acid degradation; L-glutamate degradation via mesaconate pathway; acetate and pyruvate from L-glutamate: step 1/4. Catalyzes the carbon skeleton rearrangement of L-glutamate to L-threo-3-methylaspartate ((2S,3S)-3-methylaspartate). The polypeptide is Glutamate mutase sigma subunit (Fusobacterium nucleatum subsp. nucleatum (strain ATCC 25586 / DSM 15643 / BCRC 10681 / CIP 101130 / JCM 8532 / KCTC 2640 / LMG 13131 / VPI 4355)).